Here is a 1342-residue protein sequence, read N- to C-terminus: DNA-directed RNA polymerase subunit beta (1342 aa).

Residues lysine 1022 and lysine 1200 each carry the N6-acetyllysine modification.

This sequence belongs to the RNA polymerase beta chain family. In terms of assembly, the RNAP catalytic core consists of 2 alpha, 1 beta, 1 beta' and 1 omega subunit. When a sigma factor is associated with the core the holoenzyme is formed, which can initiate transcription.

The enzyme catalyses RNA(n) + a ribonucleoside 5'-triphosphate = RNA(n+1) + diphosphate. Its function is as follows. DNA-dependent RNA polymerase catalyzes the transcription of DNA into RNA using the four ribonucleoside triphosphates as substrates. The polypeptide is DNA-directed RNA polymerase subunit beta (Escherichia coli O81 (strain ED1a)).